A 462-amino-acid polypeptide reads, in one-letter code: Malonyl-coenzyme:anthocyanin 5-O-glucoside-6'''-O-malonyltransferase (462 aa).

Residues His-167 and Asp-390 each act as proton acceptor in the active site.

This sequence belongs to the plant acyltransferase family. As to expression, detected in petals and sepals, and at lower levels in bracts and red stems.

The enzyme catalyses pelargonidin 3-O-(6-O-[(E)-caffeoyl]-beta-D-glucoside) 5-O-beta-D-glucoside + malonyl-CoA = 4'''-demalonylsalvianin + CoA. It participates in pigment biosynthesis; anthocyanin biosynthesis. Completely inhibited by 10 mM p-coumaric acid, this inhibition is rapid, reversible and non-competitive. Completely inhibited by 0.1 mM Cu(2+), 0.1 mM Hg(2+) and 10 mM caffeic acid. Partially inhibited by 5 mM N-ethylmaleimide, 1 mM diethylpyrocarbonate and 1 mM acetyl-CoA. Catalyzes the transfer of a malonyl group from malonyl-CoA to the 6'''-hydroxyl group of the 5-glucosyl moiety of anthocyanins. Active towards bisdemalonylsalvianin (pelargonidin 3-O-(6-caffeoyl-beta-D-glucoside) 5-O-beta-D-glucoside) and shisonin, but not towards nodemalonylsalvianin, salvianin, pelargonidin 3,5-diglucoside and delphinidin 3,5-diglucoside. The polypeptide is Malonyl-coenzyme:anthocyanin 5-O-glucoside-6'''-O-malonyltransferase (Salvia splendens (Scarlet sage)).